We begin with the raw amino-acid sequence, 89 residues long: Small ribosomal subunit protein uS15 (89 aa).

Belongs to the universal ribosomal protein uS15 family. As to quaternary structure, part of the 30S ribosomal subunit. Forms a bridge to the 50S subunit in the 70S ribosome, contacting the 23S rRNA.

One of the primary rRNA binding proteins, it binds directly to 16S rRNA where it helps nucleate assembly of the platform of the 30S subunit by binding and bridging several RNA helices of the 16S rRNA. In terms of biological role, forms an intersubunit bridge (bridge B4) with the 23S rRNA of the 50S subunit in the ribosome. The polypeptide is Small ribosomal subunit protein uS15 (Janthinobacterium sp. (strain Marseille) (Minibacterium massiliensis)).